The following is a 186-amino-acid chain: Ribosome-recycling factor (186 aa).

This sequence belongs to the RRF family.

Its subcellular location is the cytoplasm. Functionally, responsible for the release of ribosomes from messenger RNA at the termination of protein biosynthesis. May increase the efficiency of translation by recycling ribosomes from one round of translation to another. The polypeptide is Ribosome-recycling factor (Paraburkholderia xenovorans (strain LB400)).